A 180-amino-acid chain; its full sequence is NAD(P)H-quinone oxidoreductase subunit I, chloroplastic (180 aa).

2 consecutive 4Fe-4S ferredoxin-type domains span residues 55–84 and 95–124; these read GRIH…VDWR and LNYS…MTEE. Cys-64, Cys-67, Cys-70, Cys-74, Cys-104, Cys-107, Cys-110, and Cys-114 together coordinate [4Fe-4S] cluster.

Belongs to the complex I 23 kDa subunit family. In terms of assembly, NDH is composed of at least 16 different subunits, 5 of which are encoded in the nucleus. [4Fe-4S] cluster serves as cofactor.

The protein resides in the plastid. It is found in the chloroplast thylakoid membrane. The enzyme catalyses a plastoquinone + NADH + (n+1) H(+)(in) = a plastoquinol + NAD(+) + n H(+)(out). The catalysed reaction is a plastoquinone + NADPH + (n+1) H(+)(in) = a plastoquinol + NADP(+) + n H(+)(out). In terms of biological role, NDH shuttles electrons from NAD(P)H:plastoquinone, via FMN and iron-sulfur (Fe-S) centers, to quinones in the photosynthetic chain and possibly in a chloroplast respiratory chain. The immediate electron acceptor for the enzyme in this species is believed to be plastoquinone. Couples the redox reaction to proton translocation, and thus conserves the redox energy in a proton gradient. The polypeptide is NAD(P)H-quinone oxidoreductase subunit I, chloroplastic (Agrostis stolonifera (Creeping bentgrass)).